A 195-amino-acid polypeptide reads, in one-letter code: Glycerol-3-phosphate acyltransferase (195 aa).

The next 5 helical transmembrane spans lie at 2–22 (LWIF…GLFI), 52–72 (YGVA…LMAY), 78–98 (WIFI…SIFM), 112–132 (VFLA…LAVI), and 145–165 (FAVA…VPLA).

Belongs to the PlsY family. As to quaternary structure, probably interacts with PlsX.

It is found in the cell inner membrane. The catalysed reaction is an acyl phosphate + sn-glycerol 3-phosphate = a 1-acyl-sn-glycero-3-phosphate + phosphate. It functions in the pathway lipid metabolism; phospholipid metabolism. In terms of biological role, catalyzes the transfer of an acyl group from acyl-phosphate (acyl-PO(4)) to glycerol-3-phosphate (G3P) to form lysophosphatidic acid (LPA). This enzyme utilizes acyl-phosphate as fatty acyl donor, but not acyl-CoA or acyl-ACP. In Maridesulfovibrio salexigens (strain ATCC 14822 / DSM 2638 / NCIMB 8403 / VKM B-1763) (Desulfovibrio salexigens), this protein is Glycerol-3-phosphate acyltransferase.